Reading from the N-terminus, the 142-residue chain is Ribosome-binding factor A (142 aa).

A disordered region spans residues 119 to 142 (ETLGEVQSESDQPTTDETTTVNKT). Positions 123–142 (EVQSESDQPTTDETTTVNKT) are enriched in polar residues.

Belongs to the RbfA family. As to quaternary structure, monomer. Binds 30S ribosomal subunits, but not 50S ribosomal subunits or 70S ribosomes.

The protein localises to the cytoplasm. In terms of biological role, one of several proteins that assist in the late maturation steps of the functional core of the 30S ribosomal subunit. Associates with free 30S ribosomal subunits (but not with 30S subunits that are part of 70S ribosomes or polysomes). Required for efficient processing of 16S rRNA. May interact with the 5'-terminal helix region of 16S rRNA. In Prochlorococcus marinus (strain MIT 9303), this protein is Ribosome-binding factor A.